The primary structure comprises 296 residues: Carboxylesterase YbfK (296 aa).

Catalysis depends on charge relay system residues serine 129, glutamate 244, and histidine 273.

It belongs to the AB hydrolase superfamily.

The protein localises to the cytoplasm. The catalysed reaction is a carboxylic ester + H2O = an alcohol + a carboxylate + H(+). Shows carboxylesterase activity in vitro. The polypeptide is Carboxylesterase YbfK (ybfK) (Bacillus subtilis (strain 168)).